We begin with the raw amino-acid sequence, 248 residues long: 3-deoxy-manno-octulosonate cytidylyltransferase (248 aa).

The protein belongs to the KdsB family.

The protein localises to the cytoplasm. The catalysed reaction is 3-deoxy-alpha-D-manno-oct-2-ulosonate + CTP = CMP-3-deoxy-beta-D-manno-octulosonate + diphosphate. It functions in the pathway nucleotide-sugar biosynthesis; CMP-3-deoxy-D-manno-octulosonate biosynthesis; CMP-3-deoxy-D-manno-octulosonate from 3-deoxy-D-manno-octulosonate and CTP: step 1/1. The protein operates within bacterial outer membrane biogenesis; lipopolysaccharide biosynthesis. Its function is as follows. Activates KDO (a required 8-carbon sugar) for incorporation into bacterial lipopolysaccharide in Gram-negative bacteria. This chain is 3-deoxy-manno-octulosonate cytidylyltransferase, found in Salmonella paratyphi A (strain ATCC 9150 / SARB42).